A 57-amino-acid chain; its full sequence is Defensin-like protein 302 (57 aa).

3 disulfides stabilise this stretch: cysteine 19–cysteine 39, cysteine 26–cysteine 44, and cysteine 32–cysteine 46.

This sequence belongs to the DEFL family.

The protein is Defensin-like protein 302 of Arabidopsis thaliana (Mouse-ear cress).